Reading from the N-terminus, the 686-residue chain is Potassium-transporting ATPase ATP-binding subunit 2 (686 aa).

The next 4 helical transmembrane spans lie at 37–57 (MFVV…PNLF), 64–84 (MILY…FANF), 223–243 (LLVS…PMAI), and 255–275 (VALT…AIGI). Asp306 (4-aspartylphosphate intermediate) is an active-site residue. ATP-binding positions include Asp343, Glu347, 376-383 (FTAQTRMS), and Lys395. Positions 518 and 522 each coordinate Mg(2+). 3 helical membrane-spanning segments follow: residues 588-608 (FAII…LNIM), 616-636 (AILS…PLAM), and 656-676 (VYGV…DLVI).

Belongs to the cation transport ATPase (P-type) (TC 3.A.3) family. Type IA subfamily. In terms of assembly, the system is composed of three essential subunits: KdpA, KdpB and KdpC.

Its subcellular location is the cell membrane. The catalysed reaction is K(+)(out) + ATP + H2O = K(+)(in) + ADP + phosphate + H(+). Part of the high-affinity ATP-driven potassium transport (or Kdp) system, which catalyzes the hydrolysis of ATP coupled with the electrogenic transport of potassium into the cytoplasm. This subunit is responsible for energy coupling to the transport system and for the release of the potassium ions to the cytoplasm. This is Potassium-transporting ATPase ATP-binding subunit 2 from Listeria innocua serovar 6a (strain ATCC BAA-680 / CLIP 11262).